Consider the following 269-residue polypeptide: Putative phosphatase M6_Spy0533 (269 aa).

Residue Asp-9 is the Nucleophile of the active site. Asp-9 lines the Mg(2+) pocket. Residue Ile-10 participates in phosphate binding. Asp-11 contacts Mg(2+). Phosphate contacts are provided by residues 43–44 (TG) and Lys-196. Asp-219 contacts Mg(2+). Asn-222 contacts phosphate.

Mg(2+) is required as a cofactor.

The chain is Putative phosphatase M6_Spy0533 from Streptococcus pyogenes serotype M6 (strain ATCC BAA-946 / MGAS10394).